The primary structure comprises 245 residues: tRNA1(Val) (adenine(37)-N6)-methyltransferase (245 aa).

This sequence belongs to the methyltransferase superfamily. tRNA (adenine-N(6)-)-methyltransferase family.

The protein localises to the cytoplasm. The enzyme catalyses adenosine(37) in tRNA1(Val) + S-adenosyl-L-methionine = N(6)-methyladenosine(37) in tRNA1(Val) + S-adenosyl-L-homocysteine + H(+). Functionally, specifically methylates the adenine in position 37 of tRNA(1)(Val) (anticodon cmo5UAC). This chain is tRNA1(Val) (adenine(37)-N6)-methyltransferase, found in Klebsiella pneumoniae subsp. pneumoniae (strain ATCC 700721 / MGH 78578).